The sequence spans 490 residues: Argininosuccinate lyase (490 aa).

This sequence belongs to the lyase 1 family. Argininosuccinate lyase subfamily.

It localises to the cytoplasm. The catalysed reaction is 2-(N(omega)-L-arginino)succinate = fumarate + L-arginine. Its pathway is amino-acid biosynthesis; L-arginine biosynthesis; L-arginine from L-ornithine and carbamoyl phosphate: step 3/3. The chain is Argininosuccinate lyase from Bifidobacterium longum subsp. infantis (strain ATCC 15697 / DSM 20088 / JCM 1222 / NCTC 11817 / S12).